The sequence spans 447 residues: MTKKIITLVGRPNVGKSTLFNRLSIRKKAIVHDLPGVTRDRKYTDGKIGSFEFLLIDTPGLEENPDNMGERLMGQTTQAILEADLICFMVDGKSGVLPDDKLLSNFVRKYNKHCILVVNKCEKAFDFDKEYYKLGFDSIVIISAEHGIGLIDLYDAIISKLSVEESIERNIADPFRGDCLQIVVSGRPNAGKSTFINAIINDERLLTGPEAGITRESIEVDWQYKNTHIKLIDTAGLRKKSTITASLEKLSTSDTINSIKFANTVILMIDALAHVKQQDFNIASHIVNEGRSIIIVVNKWDLVKESEKEAFQKEFYYQINTHLPQIKGVPVLFISAINKQNIEQVLDACLKIYKIWNKKITTNKLNKWLDFTTKIHPLPLQKCGRRVRIKYMTQIKTRPPTFKLFSNNPGKITDSYTRYLVNNMRDAFDMHGIPIRFTYVKNKNPYV.

2 EngA-type G domains span residues 4 to 165 and 180 to 357; these read KIIT…SVEE and LQIV…KIWN. GTP is bound by residues 10–17, 57–61, 119–122, 186–193, 233–237, and 298–301; these read GRPNVGKS, DTPGL, NKCE, GRPNAGKS, DTAGL, and NKWD. One can recognise a KH-like domain in the interval 358-443; it reads KKITTNKLNK…PIRFTYVKNK (86 aa).

Belongs to the TRAFAC class TrmE-Era-EngA-EngB-Septin-like GTPase superfamily. EngA (Der) GTPase family. In terms of assembly, associates with the 50S ribosomal subunit.

Functionally, GTPase that plays an essential role in the late steps of ribosome biogenesis. This chain is GTPase Der, found in Rickettsia prowazekii (strain Madrid E).